Reading from the N-terminus, the 564-residue chain is Potassium-transporting ATPase potassium-binding subunit (564 aa).

The next 10 helical transmembrane spans lie at 4–24, 67–87, 135–155, 179–199, 258–278, 286–306, 382–402, 420–440, 487–507, and 534–554; these read YDYL…PWLG, TLAL…VLLL, IGLT…LVAL, LYGL…QGVP, FEVA…GHYV, AIIA…LWSE, AGLY…GLMI, LLVA…AIAA, VMIG…VLAL, and LLLL…LALG.

This sequence belongs to the KdpA family. As to quaternary structure, the system is composed of three essential subunits: KdpA, KdpB and KdpC.

It localises to the cell inner membrane. Functionally, part of the high-affinity ATP-driven potassium transport (or Kdp) system, which catalyzes the hydrolysis of ATP coupled with the electrogenic transport of potassium into the cytoplasm. This subunit binds the periplasmic potassium ions and delivers the ions to the membrane domain of KdpB through an intramembrane tunnel. The polypeptide is Potassium-transporting ATPase potassium-binding subunit (Pseudomonas entomophila (strain L48)).